A 183-amino-acid polypeptide reads, in one-letter code: Adenine phosphoribosyltransferase (183 aa).

It belongs to the purine/pyrimidine phosphoribosyltransferase family. Homodimer.

Its subcellular location is the cytoplasm. It catalyses the reaction AMP + diphosphate = 5-phospho-alpha-D-ribose 1-diphosphate + adenine. Its pathway is purine metabolism; AMP biosynthesis via salvage pathway; AMP from adenine: step 1/1. Functionally, catalyzes a salvage reaction resulting in the formation of AMP, that is energically less costly than de novo synthesis. The protein is Adenine phosphoribosyltransferase of Salmonella heidelberg (strain SL476).